A 361-amino-acid polypeptide reads, in one-letter code: Zinc transporter ZIP13 (361 aa).

Residues 1–6 (MPGCPC) are Lumenal-facing. The chain crosses the membrane as a helical span at residues 7 to 27 (PGCGMAGQRLLFLTVLALELL). The Cytoplasmic portion of the chain corresponds to 28-68 (ERAGGSQPALRSLGAAAACRLDNKESESWGALLSGERLDTW). The chain crosses the membrane as a helical span at residues 69–89 (ICSLLGSLMVGLSGVFPLLVI). At 90 to 108 (PLEMGTLLQSEAGAWRLRQ) the chain is on the lumenal side. Residues 109–129 (LLSFALGGLLGNVFLHLLPEA) form a helical membrane-spanning segment. Residues 130–150 (WAYTCNITPGGEGQSLQRQQQ) lie on the Cytoplasmic side of the membrane. A helical membrane pass occupies residues 151-171 (LGLWVIAGFLTFLALEKMFLN). Over 172-232 (SKEDPSQAPS…TIDNFTHGLA (61 aa)) the chain is Lumenal. Residues 233-253 (VAASFLVSKKIGLLTTMAILL) form a helical membrane-spanning segment. The XEXPHE-motif motif lies at 254–259 (HEIPHE). At 254–275 (HEIPHEVGDFAILLRAGFDRWT) the chain is on the cytoplasmic side. A helical membrane pass occupies residues 276 to 296 (AAKLQFSTALGGLLGACFAIC). The Lumenal segment spans residues 297–306 (TQSPKGVEET). The helical transmembrane segment at 307–327 (VVWILPFTSGGFLYIALVNVL) threads the bilayer. The Cytoplasmic segment spans residues 328-339 (PDLLEEDDPWHS). A helical transmembrane segment spans residues 340–360 (LQQVLLLCSGVLVMVLLSLFV). Position 361 (Glu-361) is a topological domain, lumenal.

It belongs to the ZIP transporter (TC 2.A.5) family. In terms of assembly, homodimer. As to expression, highly expressed in some tissues such as bone and eye. Expressed in osteoblasts of tibia and of alveolar bone, in proliferative zone of growth plate, and in odontoblasts on the forming of the dentine of crown in molar tooth. Also expressed fibroblasts in reticular layer of dermis of skin.

It is found in the golgi apparatus membrane. Its subcellular location is the cytoplasmic vesicle membrane. The protein resides in the endoplasmic reticulum membrane. It carries out the reaction Zn(2+)(in) = Zn(2+)(out). In terms of biological role, functions as a zinc transporter transporting Zn(2+) from the Golgi apparatus to the cytosol and thus influences the zinc level at least in areas of the cytosol. May regulate beige adipocyte differentiation. This is Zinc transporter ZIP13 from Mus musculus (Mouse).